The sequence spans 457 residues: RuvB-like helicase 1 (457 aa).

73–80 (GGPSTGKT) contributes to the ATP binding site.

Belongs to the RuvB family. In terms of assembly, may form heterododecamers with RVB2. Component of the SWR1 chromatin remodeling complex, the INO80 chromatin remodeling complex, and of the R2TP complex.

It is found in the nucleus. It catalyses the reaction ATP + H2O = ADP + phosphate + H(+). In terms of biological role, DNA helicase which participates in several chromatin remodeling complexes, including the SWR1 and the INO80 complexes. The SWR1 complex mediates the ATP-dependent exchange of histone H2A for the H2A variant HZT1 leading to transcriptional regulation of selected genes by chromatin remodeling. The INO80 complex remodels chromatin by shifting nucleosomes and is involved in DNA repair. Also involved in pre-rRNA processing. The protein is RuvB-like helicase 1 (RVB1) of Candida glabrata (strain ATCC 2001 / BCRC 20586 / JCM 3761 / NBRC 0622 / NRRL Y-65 / CBS 138) (Yeast).